The primary structure comprises 424 residues: tRNA(Ile)-lysidine synthase (424 aa).

ATP is bound at residue 26-31; that stretch reads SGGIDS.

The protein belongs to the tRNA(Ile)-lysidine synthase family.

Its subcellular location is the cytoplasm. It catalyses the reaction cytidine(34) in tRNA(Ile2) + L-lysine + ATP = lysidine(34) in tRNA(Ile2) + AMP + diphosphate + H(+). In terms of biological role, ligates lysine onto the cytidine present at position 34 of the AUA codon-specific tRNA(Ile) that contains the anticodon CAU, in an ATP-dependent manner. Cytidine is converted to lysidine, thus changing the amino acid specificity of the tRNA from methionine to isoleucine. This Streptococcus agalactiae serotype V (strain ATCC BAA-611 / 2603 V/R) protein is tRNA(Ile)-lysidine synthase.